Here is a 370-residue protein sequence, read N- to C-terminus: Protein-tyrosine sulfotransferase 1 (370 aa).

The Cytoplasmic segment spans residues 1–8 (MVGKLKQN). The chain crosses the membrane as a helical; Signal-anchor for type II membrane protein span at residues 9–25 (LLLACLVISSVTVFYLG). Topologically, residues 26–370 (QHAMECHHRI…KEKPQTEQVE (345 aa)) are lumenal. Residue Asn60 is glycosylated (N-linked (GlcNAc...) asparagine). 3'-phosphoadenylyl sulfate is bound at residue 79–83 (RSGTT). An intrachain disulfide couples Cys97 to Cys157. Glu100 serves as the catalytic Proton donor/acceptor. The interval 102-106 (RVIPR) is interaction with peptide substrate. Positions 184, 192, and 196 each coordinate 3'-phosphoadenylyl sulfate. Cys226 and Cys234 form a disulfide bridge. Tyr239 is a binding site for 3'-phosphoadenylyl sulfate. Asn262 carries N-linked (GlcNAc...) asparagine glycosylation. Residues 286–295 (STDQVIKPVN) and Lys301 each bind 3'-phosphoadenylyl sulfate.

This sequence belongs to the protein sulfotransferase family. Homodimer. Can also form heterodimers with TPST2. N-glycosylated. In terms of tissue distribution, ubiquitous. Detected in heart, brain, lung, liver, spleen, kidney, skeletal muscle and testis.

It is found in the golgi apparatus membrane. The catalysed reaction is L-tyrosyl-[protein] + 3'-phosphoadenylyl sulfate = O-sulfo-L-tyrosine-[protein] + adenosine 3',5'-bisphosphate + H(+). In terms of biological role, catalyzes the O-sulfation of tyrosine residues within acidic motifs of polypeptides, using 3'-phosphoadenylyl sulfate (PAPS) as cosubstrate. In Mus musculus (Mouse), this protein is Protein-tyrosine sulfotransferase 1 (Tpst1).